The chain runs to 617 residues: Threonine--tRNA ligase (617 aa).

A catalytic region spans residues 209–502 (DHRRLGKDLD…MTENYAGDFP (294 aa)). Zn(2+) contacts are provided by cysteine 302, histidine 353, and histidine 479.

It belongs to the class-II aminoacyl-tRNA synthetase family. As to quaternary structure, homodimer. Zn(2+) serves as cofactor.

The protein localises to the cytoplasm. The enzyme catalyses tRNA(Thr) + L-threonine + ATP = L-threonyl-tRNA(Thr) + AMP + diphosphate + H(+). Catalyzes the attachment of threonine to tRNA(Thr) in a two-step reaction: L-threonine is first activated by ATP to form Thr-AMP and then transferred to the acceptor end of tRNA(Thr). Also edits incorrectly charged L-seryl-tRNA(Thr). The protein is Threonine--tRNA ligase of Synechococcus sp. (strain CC9311).